An 88-amino-acid polypeptide reads, in one-letter code: Alpha-latrotoxin-associated low molecular weight protein-2 (88 aa).

Positions 1-19 (MLKLICIAFLVTVLTLVAG) are cleaved as a signal peptide. Position 20 is a pyrrolidone carboxylic acid (Gln20). Cystine bridges form between Cys30–Cys66, Cys46–Cys62, and Cys49–Cys75.

It belongs to the arthropod CHH/MIH/GIH/VIH hormone family. The N-terminus is blocked. As to expression, expressed by the venom gland.

The protein localises to the secreted. Functionally, may increase the toxicity of alpha-latrotoxin and/or other venom components. Is non-toxic to mice and to the cockroach Periplaneta americana. The protein is Alpha-latrotoxin-associated low molecular weight protein-2 of Latrodectus tredecimguttatus (Mediterranean black widow spider).